Consider the following 108-residue polypeptide: Inner membrane protein H108R (108 aa).

The chain crosses the membrane as a helical span at residues 10-32 (LIVIITILITTRELSTTMLIVSL). Polar residues predominate over residues 49–64 (ENNTFSMPQKNSFSES). Residues 49–69 (ENNTFSMPQKNSFSESYNKDK) are disordered. N-linked (GlcNAc...) asparagine; by host glycosylation occurs at asparagine 50.

This sequence belongs to the asfivirus H108R family.

Its subcellular location is the virion membrane. This Ornithodoros (relapsing fever ticks) protein is Inner membrane protein H108R.